A 469-amino-acid chain; its full sequence is Probable Xaa-Pro aminopeptidase PEPP (469 aa).

Mn(2+)-binding residues include Asp-265, Asp-276, Glu-399, and Glu-439.

The protein belongs to the peptidase M24B family. Mn(2+) is required as a cofactor.

It carries out the reaction Release of any N-terminal amino acid, including proline, that is linked to proline, even from a dipeptide or tripeptide.. Catalyzes the removal of a penultimate prolyl residue from the N-termini of peptides. The chain is Probable Xaa-Pro aminopeptidase PEPP (PEPP) from Coccidioides posadasii (strain C735) (Valley fever fungus).